A 351-amino-acid polypeptide reads, in one-letter code: Divinyl chlorophyll a/b light-harvesting protein PcbC (351 aa).

Helical transmembrane passes span 27–47, 64–84, 89–109, 203–223, 244–264, and 306–326; these read FIAA…AFTL, LICL…GVIT, CTVI…GGLL, VMGG…FHIA, VLSY…FWCA, and LSNV…WHAL.

Belongs to the PsbB/PsbC family. IsiA/Pcb subfamily. In terms of assembly, the antenna complex consists of divinyl chlorophylls (a and b) and divinyl chlorophyll a/b binding proteins and binds more divinyl chlorophyll b than does the antenna complex from high-light-adapted Prochlorococcus. Requires divinyl chlorophyll a as cofactor. The cofactor is divinyl chlorophyll b.

It localises to the cellular thylakoid membrane. In terms of biological role, the antenna complex functions as a light receptor, it captures and delivers excitation energy to photosystems II and I. The Prochlorales pcb genes are not related to higher plant LHCs. In Prochlorococcus marinus (strain SARG / CCMP1375 / SS120), this protein is Divinyl chlorophyll a/b light-harvesting protein PcbC (pcbC).